A 352-amino-acid chain; its full sequence is MNTIVFNKLSGAVLFEDGGASERERGGRPYSGVLDSPHARPEVGIADGPPLKDNLGLRHRRTGARQNGGKVRHKRQALQDMARPLKQWLYKHRDNPYPTKTEKILLALGPQMTLVQVSNWFANARRRLKNTVRQPDLSWALRIKLYNKYVQGNAERLSVSSDDSCSEGGENPPRTHMNEGGYNTPVHHPVIKSENSVIKAGVRPESRASEDYVAPPKYKSSLLNRYLNDSLRHVMATNTTMMGKTRQRNHSGSFSSNEFEEELVSPSSSETEGNFVYRTDTLENGFNKGDSAANRKGPSKDDTYWKEINAAMALTNLAQGKDKLQGTTSCIIQKSSHIAEVKTVKVPLVQHF.

A disordered region spans residues 19 to 53 (GASERERGGRPYSGVLDSPHARPEVGIADGPPLKD). Residues 71–132 (VRHKRQALQD…NARRRLKNTV (62 aa)) constitute a DNA-binding region (homeobox; TALE-type). Disordered regions lie at residues 157 to 194 (LSVS…IKSE) and 245 to 272 (TRQR…SETE).

The protein belongs to the TALE/IRO homeobox family.

Its subcellular location is the nucleus. In terms of biological role, may act as a morphogenetic regulator of cell adhesion. The polypeptide is Homeobox protein Mohawk (MKX) (Pongo abelii (Sumatran orangutan)).